The chain runs to 386 residues: Acetate kinase (386 aa).

Residue asparagine 7 participates in Mg(2+) binding. Lysine 14 provides a ligand contact to ATP. Arginine 78 is a binding site for substrate. Aspartate 135 (proton donor/acceptor) is an active-site residue. Residues 195-199, 268-270, and 316-320 contribute to the ATP site; these read HLGNG, DMR, and GIGEN. Glutamate 370 contacts Mg(2+).

It belongs to the acetokinase family. In terms of assembly, homodimer. Mg(2+) serves as cofactor. Requires Mn(2+) as cofactor.

Its subcellular location is the cytoplasm. The catalysed reaction is acetate + ATP = acetyl phosphate + ADP. It participates in metabolic intermediate biosynthesis; acetyl-CoA biosynthesis; acetyl-CoA from acetate: step 1/2. Functionally, catalyzes the formation of acetyl phosphate from acetate and ATP. Can also catalyze the reverse reaction. This Arthrobacter sp. (strain FB24) protein is Acetate kinase.